Here is a 584-residue protein sequence, read N- to C-terminus: Vesicular glutamate transporter 2.1 (584 aa).

At 1-70 (METPREPAGF…CTCFGLPRRY (70 aa)) the chain is on the cytoplasmic side. Residues 71 to 91 (IIAIMSGLGFCISFGIRCNLG) traverse the membrane as a helical segment. Residues 92–124 (VAIVSMVNNSTIHLNGKIIIKEKAKFNWDPETV) lie on the Vesicular side of the membrane. Residues N99 and N100 are each glycosylated (N-linked (GlcNAc...) asparagine). A helical transmembrane segment spans residues 125-145 (GLIHGSFFWGYIVTQIPGGYI). The Cytoplasmic segment spans residues 146–148 (SSR). A helical membrane pass occupies residues 149–169 (LAANRVFGAAILLTSTLNMFI). The Vesicular segment spans residues 170–177 (PSAARGHY). The chain crosses the membrane as a helical span at residues 178–198 (GCVIFVRILQGLVEGVTYPAC). Residues 199 to 216 (HGIWSKWAPPLERSRLAT) are Cytoplasmic-facing. The chain crosses the membrane as a helical span at residues 217-237 (TSFCGSYAGAVIAMPLAGILV). Residues 238–244 (QYTGWSS) are Vesicular-facing. A helical membrane pass occupies residues 245 to 265 (VFYVYGCFGIFWYMFWILVSY). The Cytoplasmic segment spans residues 266–310 (ESPAEHPTITAEERCYIEESIGESAKLLGPADKFKTPWRKFFTSM). The chain crosses the membrane as a helical span at residues 311-331 (PVYAIIVANFCRSWTFYLLLI). The Vesicular segment spans residues 332–349 (SQPAYFEEVFGFEISKVG). A helical membrane pass occupies residues 350–370 (MLSALPHLVMTIIVPIGGQLA). Residues 371 to 386 (DHLRSKNILSTTTVRK) lie on the Cytoplasmic side of the membrane. A helical membrane pass occupies residues 387–407 (IMNCGGFGMEATLLLIVGYSH). Residues 408 to 409 (SK) lie on the Vesicular side of the membrane. The helical transmembrane segment at 410-430 (GVAISFLVLAVGFSGFAISGF) threads the bilayer. At 431-445 (NVNHLDIAPRYASIL) the chain is on the cytoplasmic side. The chain crosses the membrane as a helical span at residues 446–466 (MGISNGVGTLSGMVCPLIVGA). At 467-477 (MTKHKTREEWQ) the chain is on the vesicular side. A helical membrane pass occupies residues 478-498 (YVFLIASLVHYGGVIFYGIFA). The Cytoplasmic segment spans residues 499–584 (SGEKQPWADP…YGYRQGGNYS (86 aa)).

Belongs to the major facilitator superfamily. Sodium/anion cotransporter family. VGLUT subfamily. As to expression, expressed in spinal cord and retinal ganglion cells.

It is found in the cytoplasmic vesicle. Its subcellular location is the secretory vesicle. The protein localises to the synaptic vesicle membrane. It localises to the membrane. The protein resides in the synapse. It is found in the synaptosome. Its subcellular location is the cell membrane. It carries out the reaction L-glutamate(out) = L-glutamate(in). The catalysed reaction is 3 Na(+)(out) + phosphate(out) = 3 Na(+)(in) + phosphate(in). It catalyses the reaction phosphate(in) = phosphate(out). The enzyme catalyses K(+)(in) + H(+)(out) = K(+)(out) + H(+)(in). It carries out the reaction chloride(in) = chloride(out). Chloride channel activity is allosterically activated by lumenal H(+) and Cl(-) leading to synaptic vesicles acidification. The L-glutamate transport activity is allosterically activated by lumenal H(+) and Cl(-). The allosteric requirement for H(+) efficiently prevents non-vesicular efflux across the plasma membrane. The L-glutamate uniporter activity exhibits a biphasic dependence on chloride concentration. Functionally, multifunctional transporter that transports L-glutamate as well as multiple ions such as chloride, proton, potassium, sodium and phosphate. At the synaptic vesicle membrane, mainly functions as a uniporter which transports preferentially L-glutamate but also, phosphate from the cytoplasm into synaptic vesicles at presynaptic nerve terminals of excitatory neural cells. The L-glutamate or phosphate uniporter activity is electrogenic and is driven by the proton electrochemical gradient, mainly by the electrical gradient established by the vacuolar H(+)-ATPase across the synaptic vesicle membrane. In addition, functions as a chloride channel that allows a chloride permeation through the synaptic vesicle membrane therefore affects the proton electrochemical gradient and promotes synaptic vesicles acidification. Moreover, functions as a vesicular K(+)/H(+) antiport allowing to maintain the electrical gradient and to decrease chemical gradient and therefore sustain vesicular L-glutamate uptake. The vesicular H(+)/H(+) antiport activity is electroneutral. At the plasma membrane, following exocytosis, functions as a symporter of Na(+) and phosphate from the extracellular space to the cytoplasm allowing synaptic phosphate homeostasis regulation. The symporter activity is driven by an inside negative membrane potential and is electrogenic. Also involved in the regulation of retinal hyaloid vessel regression during postnatal development. May also play a role in the endocrine L-glutamatergic system of other tissues such as pineal gland and pancreas. Required for glutamate release by retinotectal synapses and visual acuity. This is Vesicular glutamate transporter 2.1 (slc17a6b) from Danio rerio (Zebrafish).